A 209-amino-acid polypeptide reads, in one-letter code: Ribosomal RNA large subunit methyltransferase E (209 aa).

Residues G63, W65, D83, D99, and D124 each coordinate S-adenosyl-L-methionine. K164 serves as the catalytic Proton acceptor.

Belongs to the class I-like SAM-binding methyltransferase superfamily. RNA methyltransferase RlmE family.

Its subcellular location is the cytoplasm. The catalysed reaction is uridine(2552) in 23S rRNA + S-adenosyl-L-methionine = 2'-O-methyluridine(2552) in 23S rRNA + S-adenosyl-L-homocysteine + H(+). Functionally, specifically methylates the uridine in position 2552 of 23S rRNA at the 2'-O position of the ribose in the fully assembled 50S ribosomal subunit. This Escherichia coli O81 (strain ED1a) protein is Ribosomal RNA large subunit methyltransferase E.